A 124-amino-acid polypeptide reads, in one-letter code: Histone H2A (124 aa).

A compositionally biased stretch (basic residues) spans 1 to 18 (MSGRGKGGKAKGKSKTRS). The tract at residues 1 to 23 (MSGRGKGGKAKGKSKTRSSRAGL) is disordered. Serine 2 carries the N-acetylserine modification. Position 2 is a phosphoserine (serine 2). Glutamine 104 is subject to N5-methylglutamine.

It belongs to the histone H2A family. In terms of assembly, the nucleosome is a histone octamer containing two molecules each of H2A, H2B, H3 and H4 assembled in one H3-H4 heterotetramer and two H2A-H2B heterodimers. The octamer wraps approximately 147 bp of DNA. In terms of processing, phosphorylation of Ser-2 directly represses transcription.

Its subcellular location is the nucleus. The protein resides in the chromosome. Core component of nucleosome. Nucleosomes wrap and compact DNA into chromatin, limiting DNA accessibility to the cellular machineries which require DNA as a template. Histones thereby play a central role in transcription regulation, DNA repair, DNA replication and chromosomal stability. DNA accessibility is regulated via a complex set of post-translational modifications of histones, also called histone code, and nucleosome remodeling. This Platynereis dumerilii (Dumeril's clam worm) protein is Histone H2A.